The chain runs to 66 residues: KEGYIVNYHDGCKYECYKLGDNDYCLRECRSRYGKGAGGYCYAFGCWCTHLYEQAVVWPLPKKTCN.

One can recognise an LCN-type CS-alpha/beta domain in the interval 1–66 (KEGYIVNYHD…VWPLPKKTCN (66 aa)). 4 disulfide bridges follow: C12-C65, C16-C41, C25-C46, and C29-C48. Position 66 is an asparagine amide (N66).

It belongs to the long (4 C-C) scorpion toxin superfamily. Sodium channel inhibitor family. Beta subfamily. As to expression, expressed by the venom gland.

It localises to the secreted. Beta toxins bind voltage-independently at site-4 of sodium channels (Nav) and shift the voltage of activation toward more negative potentials thereby affecting sodium channel activation and promoting spontaneous and repetitive firing. Lethal to mice. This Centruroides tecomanus (Scorpion) protein is Beta-toxin Ct71.